A 388-amino-acid chain; its full sequence is Putative [LysW]-aminoadipate semialdehyde/glutamate semialdehyde transaminase (388 aa).

Pyridoxal 5'-phosphate contacts are provided by residues 100 to 101 (GT) and F127. Position 130 (R130) interacts with substrate. A pyridoxal 5'-phosphate-binding site is contributed by 211-214 (DEIQ). K240 bears the N6-(pyridoxal phosphate)lysine mark. S268 contacts substrate. A pyridoxal 5'-phosphate-binding site is contributed by T269.

Belongs to the class-III pyridoxal-phosphate-dependent aminotransferase family. LysJ subfamily. Homodimer. The cofactor is pyridoxal 5'-phosphate.

Its subcellular location is the cytoplasm. It carries out the reaction [amino-group carrier protein]-C-terminal-gamma-(L-lysyl)-L-glutamate + 2-oxoglutarate = [amino-group carrier protein]-C-terminal-N-(1-carboxy-5-oxopentan-1-yl)-L-glutamine + L-glutamate. It catalyses the reaction [amino-group carrier protein]-C-terminal-gamma-(L-ornithyl)-L-glutamate + 2-oxoglutarate = [amino-group carrier protein]-C-terminal-gamma-(L-glutamyl-5-semialdehyde)-L-glutamate + L-glutamate. It functions in the pathway amino-acid biosynthesis; L-lysine biosynthesis via AAA pathway; L-lysine from L-alpha-aminoadipate (Thermus route): step 4/5. Its pathway is amino-acid biosynthesis; L-arginine biosynthesis. Its function is as follows. Involved in both the arginine and lysine biosynthetic pathways. This Aeropyrum pernix (strain ATCC 700893 / DSM 11879 / JCM 9820 / NBRC 100138 / K1) protein is Putative [LysW]-aminoadipate semialdehyde/glutamate semialdehyde transaminase.